Here is a 498-residue protein sequence, read N- to C-terminus: Putative antiporter subunit mnhD2 (498 aa).

14 consecutive transmembrane segments (helical) span residues 2 to 22 (LSNL…ILVF), 32 to 52 (YLYL…LIYV), 78 to 98 (LSLI…AYGF), 108 to 128 (YHLP…FLTS), 130 to 150 (LFNL…LITL), 161 to 181 (IIYV…IGLL), 209 to 229 (ISLI…FMWL), 240 to 260 (LAAL…IRFF), 271 to 291 (IHPL…IGVI), 308 to 328 (IGFI…GAIF), 330 to 350 (LVND…LVYI), 369 to 389 (FGVA…FSGF), 403 to 423 (GNYI…YSLF), and 451 to 471 (ILSI…VVLN).

The protein belongs to the CPA3 antiporters (TC 2.A.63) subunit D family. In terms of assembly, may form a heterooligomeric complex that consists of seven subunits: mnhA2, mnhB2, mnhC2, mnhD2, mnhE2, mnhF2 and mnhG2.

The protein resides in the cell membrane. In Staphylococcus aureus (strain JH1), this protein is Putative antiporter subunit mnhD2 (mnhD2).